The following is a 187-amino-acid chain: Capsid protein VP10 (187 aa).

Residues Cys-45 and Cys-51 are joined by a disulfide bond.

Its subcellular location is the virion. Its function is as follows. VP10 self-assembles, together with capsid protein VP4, to form an icosahedral caspid of 87 nm in diameter, with a T=43 symmetry and composed of 420 hexamers and 12 pentamers. VP4 proteins arrange into hexons, while VP10 proteins form the pentameric densities located at the 5-fold axes in the virion. The stoichiometry of VP4:VP10 is 42:1. The polypeptide is Capsid protein VP10 (Sulfolobus polyhedral virus 1 (SPV1)).